The chain runs to 237 residues: Cytidylate kinase (237 aa).

15–23 (GPSGSGKGT) is an ATP binding site.

It belongs to the cytidylate kinase family. Type 1 subfamily.

Its subcellular location is the cytoplasm. It catalyses the reaction CMP + ATP = CDP + ADP. It carries out the reaction dCMP + ATP = dCDP + ADP. The polypeptide is Cytidylate kinase (Coxiella burnetii (strain RSA 493 / Nine Mile phase I)).